A 278-amino-acid chain; its full sequence is Phosphatidylglycerol--prolipoprotein diacylglyceryl transferase (278 aa).

The next 4 helical transmembrane spans lie at 12–32, 44–64, 86–106, and 113–133; these read FGPL…LIGL, LENG…VIGA, IWEG…TLIL, and QPFL…QAIG. Arginine 134 contributes to the a 1,2-diacyl-sn-glycero-3-phospho-(1'-sn-glycerol) binding site. Helical transmembrane passes span 173–193, 203–223, and 246–266; these read PTFL…LVLF, FPAG…RIWI, and IAQL…WWLK.

It belongs to the Lgt family.

It is found in the cell inner membrane. The enzyme catalyses L-cysteinyl-[prolipoprotein] + a 1,2-diacyl-sn-glycero-3-phospho-(1'-sn-glycerol) = an S-1,2-diacyl-sn-glyceryl-L-cysteinyl-[prolipoprotein] + sn-glycerol 1-phosphate + H(+). It participates in protein modification; lipoprotein biosynthesis (diacylglyceryl transfer). Catalyzes the transfer of the diacylglyceryl group from phosphatidylglycerol to the sulfhydryl group of the N-terminal cysteine of a prolipoprotein, the first step in the formation of mature lipoproteins. This is Phosphatidylglycerol--prolipoprotein diacylglyceryl transferase from Parasynechococcus marenigrum (strain WH8102).